The sequence spans 241 residues: Pyridoxine 5'-phosphate synthase (241 aa).

Asn-10 lines the 3-amino-2-oxopropyl phosphate pocket. Position 12–13 (12–13 (DH)) interacts with 1-deoxy-D-xylulose 5-phosphate. Arg-21 is a 3-amino-2-oxopropyl phosphate binding site. The active-site Proton acceptor is His-48. 1-deoxy-D-xylulose 5-phosphate is bound by residues Arg-50 and His-55. Glu-75 (proton acceptor) is an active-site residue. A 1-deoxy-D-xylulose 5-phosphate-binding site is contributed by Thr-105. Catalysis depends on His-195, which acts as the Proton donor. Residues Gly-196 and 217–218 (GH) each bind 3-amino-2-oxopropyl phosphate.

Belongs to the PNP synthase family. In terms of assembly, homooctamer; tetramer of dimers.

The protein resides in the cytoplasm. The enzyme catalyses 3-amino-2-oxopropyl phosphate + 1-deoxy-D-xylulose 5-phosphate = pyridoxine 5'-phosphate + phosphate + 2 H2O + H(+). It participates in cofactor biosynthesis; pyridoxine 5'-phosphate biosynthesis; pyridoxine 5'-phosphate from D-erythrose 4-phosphate: step 5/5. Catalyzes the complicated ring closure reaction between the two acyclic compounds 1-deoxy-D-xylulose-5-phosphate (DXP) and 3-amino-2-oxopropyl phosphate (1-amino-acetone-3-phosphate or AAP) to form pyridoxine 5'-phosphate (PNP) and inorganic phosphate. This Bdellovibrio bacteriovorus (strain ATCC 15356 / DSM 50701 / NCIMB 9529 / HD100) protein is Pyridoxine 5'-phosphate synthase.